The following is a 306-amino-acid chain: MAKHVAVLMGGWSPEREVSLRSGAGCAKALEEVGYRVTRVDVDRDVAEVLARLKPDVALNLLHGCPGEDGTIQGILEILRIPYSHSGVLASALAMDKARAKVVMAAAGIPVPGGHLVTRAEAAKGHVLPPPYVLKPNTGGSSVGVFIVKEDQPHPPQELFRADWTFGESLMAEPFIKGLELTCGVMGDRALDVIEVEAVHGFYDYESKYAAGGSRHILPARVLPQIYQQVRMLALEAHRALGCRGISRADFRYDDTLPDGKGLVCLEVNTQPGMTETSLVPDMAAHAGISFGELVTWMVEDATLDR.

The ATP-grasp domain occupies 101 to 300 (KVVMAAAGIP…FGELVTWMVE (200 aa)). 128 to 182 (LPPPYVLKPNTGGSSVGVFIVKEDQPHPPQELFRADWTFGESLMAEPFIKGLELT) lines the ATP pocket. Mg(2+) is bound by residues Asp-250, Glu-267, and Asn-269.

It belongs to the D-alanine--D-alanine ligase family. The cofactor is Mg(2+). It depends on Mn(2+) as a cofactor.

It is found in the cytoplasm. The catalysed reaction is 2 D-alanine + ATP = D-alanyl-D-alanine + ADP + phosphate + H(+). Its pathway is cell wall biogenesis; peptidoglycan biosynthesis. Cell wall formation. In Azorhizobium caulinodans (strain ATCC 43989 / DSM 5975 / JCM 20966 / LMG 6465 / NBRC 14845 / NCIMB 13405 / ORS 571), this protein is D-alanine--D-alanine ligase.